The primary structure comprises 212 residues: Deoxyribose-phosphate aldolase (212 aa).

Catalysis depends on aspartate 89, which acts as the Proton donor/acceptor. Lysine 151 serves as the catalytic Schiff-base intermediate with acetaldehyde. Catalysis depends on lysine 180, which acts as the Proton donor/acceptor.

This sequence belongs to the DeoC/FbaB aldolase family. DeoC type 1 subfamily.

The protein localises to the cytoplasm. The catalysed reaction is 2-deoxy-D-ribose 5-phosphate = D-glyceraldehyde 3-phosphate + acetaldehyde. It functions in the pathway carbohydrate degradation; 2-deoxy-D-ribose 1-phosphate degradation; D-glyceraldehyde 3-phosphate and acetaldehyde from 2-deoxy-alpha-D-ribose 1-phosphate: step 2/2. Catalyzes a reversible aldol reaction between acetaldehyde and D-glyceraldehyde 3-phosphate to generate 2-deoxy-D-ribose 5-phosphate. This chain is Deoxyribose-phosphate aldolase, found in Clostridium botulinum (strain Okra / Type B1).